The primary structure comprises 126 residues: Fluoride-specific ion channel FluC (126 aa).

The next 4 membrane-spanning stretches (helical) occupy residues 6-26, 36-56, 69-89, and 99-119; these read FVAV…FSVL, YGTL…VGFF, LAIT…SEVV, and WAAM…ALGL. Na(+) is bound by residues Gly76 and Thr79.

It belongs to the fluoride channel Fluc/FEX (TC 1.A.43) family.

The protein resides in the cell inner membrane. The enzyme catalyses fluoride(in) = fluoride(out). Its activity is regulated as follows. Na(+) is not transported, but it plays an essential structural role and its presence is essential for fluoride channel function. Its function is as follows. Fluoride-specific ion channel. Important for reducing fluoride concentration in the cell, thus reducing its toxicity. The protein is Fluoride-specific ion channel FluC of Cupriavidus taiwanensis (strain DSM 17343 / BCRC 17206 / CCUG 44338 / CIP 107171 / LMG 19424 / R1) (Ralstonia taiwanensis (strain LMG 19424)).